The sequence spans 396 residues: Probable sugar efflux transporter (396 aa).

Helical transmembrane passes span 15–35, 50–70, 81–101, 103–123, 136–156, 170–190, 209–229, 246–266, 275–295, 299–319, 333–353, and 364–384; these read VVTL…PVGL, VGIM…PFML, LICL…SWSF, VLVI…SITA, AQAL…GLPL, FFAI…LLPL, PALM…YTAY, FATA…VIFG, TLVS…LPAA, IHLG…GLGM, VAMA…ALVG, and MIGY…IIIF.

The protein belongs to the major facilitator superfamily. SotB (TC 2.A.1.2) family.

The protein localises to the cell inner membrane. Its function is as follows. Involved in the efflux of sugars. The physiological role may be the reduction of the intracellular concentration of toxic sugars or sugar metabolites. This is Probable sugar efflux transporter from Escherichia coli (strain SMS-3-5 / SECEC).